Here is a 323-residue protein sequence, read N- to C-terminus: MIEFGNFYQLIAKNHLSHWLETLPAQIAAWQREQQHGLFKQWSNAVEFLPEMTPWRLDLLHSVTAESETPLSEGQLKRIDTLLRNLMPWRKGPFSLYGVDIDTEWRSDWKWDRVLPHLSDLTGRTILDVGCGSGYHLWRMIGAGAHLAVGIDPTQLFLCQFEVVRKLLGNDQRAHLLPLGIEQLPALKAFDTVFSMGVLYHRRSPLEHLWQLKDQLVNEGELVLETLVVDGDENTVLVPGDRYAQMRNVYFIPSAPALKKWLEKCGFIDVRIADVCVTTTEEQRRTEWMVTESLADFLDPNDRSKTVEGYPAPQRAVLIARKP.

Residues lysine 91, tryptophan 105, lysine 110, glycine 130, 152–154, 181–182, methionine 196, tyrosine 200, and arginine 315 contribute to the carboxy-S-adenosyl-L-methionine site; these read DPT and IE.

The protein belongs to the class I-like SAM-binding methyltransferase superfamily. CmoB family. In terms of assembly, homotetramer.

It carries out the reaction carboxy-S-adenosyl-L-methionine + 5-hydroxyuridine(34) in tRNA = 5-carboxymethoxyuridine(34) in tRNA + S-adenosyl-L-homocysteine + H(+). In terms of biological role, catalyzes carboxymethyl transfer from carboxy-S-adenosyl-L-methionine (Cx-SAM) to 5-hydroxyuridine (ho5U) to form 5-carboxymethoxyuridine (cmo5U) at position 34 in tRNAs. The polypeptide is tRNA U34 carboxymethyltransferase (Salmonella gallinarum (strain 287/91 / NCTC 13346)).